We begin with the raw amino-acid sequence, 416 residues long: CCA-adding enzyme (416 aa).

ATP is bound by residues Ser-42 and Lys-45. Ser-42 and Lys-45 together coordinate CTP. The Mg(2+) site is built by Asp-54, Asp-56, and Asp-107. Positions 130, 150, and 159 each coordinate ATP. Residues His-130, Lys-150, and Tyr-159 each contribute to the CTP site.

This sequence belongs to the tRNA nucleotidyltransferase/poly(A) polymerase family. Archaeal CCA-adding enzyme subfamily. As to quaternary structure, homodimer. It depends on Mg(2+) as a cofactor.

The enzyme catalyses a tRNA precursor + 2 CTP + ATP = a tRNA with a 3' CCA end + 3 diphosphate. The catalysed reaction is a tRNA with a 3' CCA end + 2 CTP + ATP = a tRNA with a 3' CCACCA end + 3 diphosphate. Its function is as follows. Catalyzes the addition and repair of the essential 3'-terminal CCA sequence in tRNAs without using a nucleic acid template. Adds these three nucleotides in the order of C, C, and A to the tRNA nucleotide-73, using CTP and ATP as substrates and producing inorganic pyrophosphate. tRNA 3'-terminal CCA addition is required both for tRNA processing and repair. Also involved in tRNA surveillance by mediating tandem CCA addition to generate a CCACCA at the 3' terminus of unstable tRNAs. While stable tRNAs receive only 3'-terminal CCA, unstable tRNAs are marked with CCACCA and rapidly degraded. In Sulfolobus acidocaldarius (strain ATCC 33909 / DSM 639 / JCM 8929 / NBRC 15157 / NCIMB 11770), this protein is CCA-adding enzyme.